Consider the following 75-residue polypeptide: Small ribosomal subunit protein bS18 (75 aa).

This sequence belongs to the bacterial ribosomal protein bS18 family. In terms of assembly, part of the 30S ribosomal subunit. Forms a tight heterodimer with protein bS6.

Functionally, binds as a heterodimer with protein bS6 to the central domain of the 16S rRNA, where it helps stabilize the platform of the 30S subunit. The chain is Small ribosomal subunit protein bS18 from Shewanella halifaxensis (strain HAW-EB4).